A 177-amino-acid polypeptide reads, in one-letter code: uncharacterized protein (177 aa).

The next 4 helical transmembrane spans lie at 20–42, 62–84, 94–116, and 136–158; these read NLVSYAVGGILAIAGYVLILLAL, VVLWIIAVLIVIFAVGISFVSLS, AMSSFLVGVILFYILSVIGGYFI, and GLLYFIGTLLLIVIVGIIVIIVA.

The protein localises to the cell membrane. This is an uncharacterized protein from Methanocaldococcus jannaschii (strain ATCC 43067 / DSM 2661 / JAL-1 / JCM 10045 / NBRC 100440) (Methanococcus jannaschii).